The sequence spans 118 residues: Large ribosomal subunit protein bL20 (118 aa).

This sequence belongs to the bacterial ribosomal protein bL20 family.

Functionally, binds directly to 23S ribosomal RNA and is necessary for the in vitro assembly process of the 50S ribosomal subunit. It is not involved in the protein synthesizing functions of that subunit. The polypeptide is Large ribosomal subunit protein bL20 (rplT) (Aquifex aeolicus (strain VF5)).